Here is a 350-residue protein sequence, read N- to C-terminus: Protein RecA (350 aa).

65–72 (GPESSGKT) is a binding site for ATP.

Belongs to the RecA family.

The protein resides in the cytoplasm. Its function is as follows. Can catalyze the hydrolysis of ATP in the presence of single-stranded DNA, the ATP-dependent uptake of single-stranded DNA by duplex DNA, and the ATP-dependent hybridization of homologous single-stranded DNAs. It interacts with LexA causing its activation and leading to its autocatalytic cleavage. The polypeptide is Protein RecA (Clostridium tetani (strain Massachusetts / E88)).